The sequence spans 1222 residues: ATP-dependent helicase/nuclease subunit A (1222 aa).

Residues 39 to 495 form the UvrD-like helicase ATP-binding domain; sequence QKRTAQQIEA…ILLKENFRSQ (457 aa). Residue 60–67 coordinates ATP; it reads ASAGSGKT. The region spanning 524-810 is the UvrD-like helicase C-terminal domain; it reads QLIAGSHAQT…NLMTIHKSKG (287 aa).

This sequence belongs to the helicase family. AddA subfamily. Heterodimer of AddA and AddB/RexB. Requires Mg(2+) as cofactor.

It catalyses the reaction Couples ATP hydrolysis with the unwinding of duplex DNA by translocating in the 3'-5' direction.. The catalysed reaction is ATP + H2O = ADP + phosphate + H(+). Functionally, the heterodimer acts as both an ATP-dependent DNA helicase and an ATP-dependent, dual-direction single-stranded exonuclease. Recognizes the chi site generating a DNA molecule suitable for the initiation of homologous recombination. The AddA nuclease domain is required for chi fragment generation; this subunit has the helicase and 3' -&gt; 5' nuclease activities. This Streptococcus pyogenes serotype M4 (strain MGAS10750) protein is ATP-dependent helicase/nuclease subunit A.